We begin with the raw amino-acid sequence, 250 residues long: Small ribosomal subunit protein uS3 (250 aa).

The region spanning V39–D107 is the KH type-2 domain. The tract at residues M215–E250 is disordered. Residues A220–E250 show a composition bias toward basic and acidic residues.

The protein belongs to the universal ribosomal protein uS3 family. As to quaternary structure, part of the 30S ribosomal subunit. Forms a tight complex with proteins S10 and S14.

In terms of biological role, binds the lower part of the 30S subunit head. Binds mRNA in the 70S ribosome, positioning it for translation. The chain is Small ribosomal subunit protein uS3 from Acinetobacter baumannii (strain AB0057).